Consider the following 152-residue polypeptide: Small ribosomal subunit protein uS8m (152 aa).

Belongs to the universal ribosomal protein uS8 family.

Its subcellular location is the mitochondrion. This chain is Small ribosomal subunit protein uS8m (RPS8), found in Marchantia polymorpha (Common liverwort).